The primary structure comprises 449 residues: HSPB1-associated protein 1 homolog (449 aa).

Residues 102–266 (WAYADYKYIA…DEARVAEALT (165 aa)) enclose the JmjC domain. Over residues 385 to 395 (DQDKLRSDNKL) the composition is skewed to basic and acidic residues. The segment at 385-416 (DQDKLRSDNKLGQRSGQSVLQDTENPGGSGEM) is disordered. The span at 396-410 (GQRSGQSVLQDTENP) shows a compositional bias: polar residues.

The protein resides in the cytoplasm. In terms of biological role, may play a role in cellular stress response. This chain is HSPB1-associated protein 1 homolog (hspbap1), found in Danio rerio (Zebrafish).